The sequence spans 350 residues: Protein disulfide isomerase Creld2 (350 aa).

Positions 1–22 are cleaved as a signal peptide; the sequence is MHLLLAAAFGLLLLLPPPGAVA. Residues 29–32 carry the CXXC motif; sequence CQRC. 4 disulfides stabilise this stretch: Cys29–Cys32, Cys138–Cys152, Cys146–Cys164, and Cys166–Cys175. The 43-residue stretch at 134 to 176 folds into the EGF-like 1 domain; the sequence is DCQECQGGSERPCSGNGYCSGDGSRQGDGSCQCHTGYKGPLCI. The FU 1 repeat unit spans residues 191–238; the sequence is HSICSACDESCKTCSGPSNKDCIQCEVGWARVEDACVDVDECAAETSP. N-linked (GlcNAc...) asparagine glycosylation occurs at Asn249. One copy of the FU 2 repeat lies at 251–298; the sequence is SYTCEDCDSTCVGCTGKGPANCKECIAGYTKESGQCTDIDECSLEEKA. A CXXC motif is present at residues 261 to 264; it reads CVGC. 4 disulfides stabilise this stretch: Cys261–Cys264, Cys292–Cys306, Cys299–Cys315, and Cys317–Cys328. The region spanning 288-329 is the EGF-like 2; calcium-binding domain; the sequence is DIDECSLEEKACKRKNENCYNVPGSFVCVCPEGFEETEDACV.

Belongs to the CRELD family. In terms of assembly, interacts with CHRNA4. Component of a complex containing at least CRELD2, MANF, MATN3 and PDIA4. Expressed in chondrocytes (at protein level).

It localises to the endoplasmic reticulum. It carries out the reaction Catalyzes the rearrangement of -S-S- bonds in proteins.. In terms of biological role, protein disulfide isomerase. Might play a role in the unfolded protein response. May regulate transport of alpha4-beta2 neuronal acetylcholine receptor. In Mus musculus (Mouse), this protein is Protein disulfide isomerase Creld2 (Creld2).